Consider the following 292-residue polypeptide: Ribosomal RNA small subunit methyltransferase I (292 aa).

It belongs to the methyltransferase superfamily. RsmI family.

The protein resides in the cytoplasm. It carries out the reaction cytidine(1402) in 16S rRNA + S-adenosyl-L-methionine = 2'-O-methylcytidine(1402) in 16S rRNA + S-adenosyl-L-homocysteine + H(+). Its function is as follows. Catalyzes the 2'-O-methylation of the ribose of cytidine 1402 (C1402) in 16S rRNA. In Bacillus subtilis (strain 168), this protein is Ribosomal RNA small subunit methyltransferase I.